A 291-amino-acid chain; its full sequence is 33 kDa chaperonin (291 aa).

Disulfide bonds link Cys237–Cys239 and Cys270–Cys273.

This sequence belongs to the HSP33 family. In terms of processing, under oxidizing conditions two disulfide bonds are formed involving the reactive cysteines. Under reducing conditions zinc is bound to the reactive cysteines and the protein is inactive.

It localises to the cytoplasm. Its function is as follows. Redox regulated molecular chaperone. Protects both thermally unfolding and oxidatively damaged proteins from irreversible aggregation. Plays an important role in the bacterial defense system toward oxidative stress. In Bacillus mycoides (strain KBAB4) (Bacillus weihenstephanensis), this protein is 33 kDa chaperonin.